Here is a 965-residue protein sequence, read N- to C-terminus: MKNNLRYGIRKHKLGAASVFLGTMIVIGMGQDKEAAASEQKTTTVEENGNSATDNKVSETQTTTTNVNTIDETQSYSATATEQPSNATQVTTEEAPKAVQAPQTAQPANVETVKEEVVKEEANPQVKETTQSQDNSGDQRQVDLTPKKATQNQVAETQVEVAQPRTALESKPRVTRSTDVAEAKEASDAKVETGTDVTSKVTVEDESKIEAPKGNNVQPHEGQRVVLKYKLKFQDGLKTGDYFDFTLSNNVNTHGVATTRKVPDIKNGSLVMAKGQVLDNGRIRYTFTDYIKDKVNVTANLEINLFIDPKTVQSNGQQTITSKLNGKETSGTMQITYKDGVKNQYTNVNGSIETFDKEKNKFTHVAYIKPINGNNSDSVTVTGMLTQGSNENGTQPNVKIYEYVGVENGLPQSVYANTVDSTQLKDVTNQMGDKLKVQNNGSYSLNFDKLDKTYVIHYTGDYLNGTSEVNFRTQLTGYPENRYKTYYYYNNGYTLTWDNGLVLYSNKANGDGKYGPIVDSNNFEFSEDSGNGSISGQYDAKQIIETEENQDNTPLDIDYHTAIDGEGGYVDGYIETIEETDSSAIDIDYHTAVDSEAGHVGGYTESSEESNPIDFEESTHENSKHHADVVEYEEDTNPGGGQVTTESNLVEFDEESTKGIVTGAVSDHTTVEDTKEYTTESNLIELVDELPEEHGQAQGPVEEITENNHHISHSGLGTENGHGNYGVIEEIEENSHVDIKSELGYEGGQNSGNQSFEEDTEEDKPKYEQGGNIIDIDFDSVPQIHGFNKHNEIIEEDTNKDKPNYQFGGHNSVDFEEDTLPKVSGQNEGQQTIEEDTTPPTPPTPEVPSEPGTPTPPTPEVPSEPGKPTPPTPEVPAEPGKPVPPAKEEPKKPSKPVEQGKVVTPVIEINEKVKAVAPTKQKQAKKSELPETGGEESTNKGMLFGGLFSILGLALLRRNKKNHKA.

Positions 1–36 (MKNNLRYGIRKHKLGAASVFLGTMIVIGMGQDKEAA) are cleaved as a signal peptide. A YSIRK-G/S signaling motif motif is present at residues 7 to 18 (YGIRKHKLGAAS). The interval 37–206 (ASEQKTTTVE…VTSKVTVEDE (170 aa)) is disordered. Residues 37 to 514 (ASEQKTTTVE…SNKANGDGKY (478 aa)) form a ligand-binding A region region. The span at 39–55 (EQKTTTVEENGNSATDN) shows a compositional bias: polar residues. A compositionally biased stretch (low complexity) spans 59–74 (ETQTTTTNVNTIDETQ). The span at 75 to 92 (SYSATATEQPSNATQVTT) shows a compositional bias: polar residues. Residues 112 to 122 (TVKEEVVKEEA) show a composition bias toward basic and acidic residues. Polar residues predominate over residues 126–139 (VKETTQSQDNSGDQ). The span at 179-193 (DVAEAKEASDAKVET) shows a compositional bias: basic and acidic residues. A fibrinogen/elastin/tropoelastin-binding region spans residues 194–514 (GTDVTSKVTV…SNKANGDGKY (321 aa)). Residues 515–837 (GPIVDSNNFE…EGQQTIEEDT (323 aa)) form a fibronectin-binding region. Residues 548-577 (ENQDNTPLDIDYHTAIDGEGGYVDGYIETI) form a B-1 repeat. A 2 X approximate tandem repeats region spans residues 548 to 607 (ENQDNTPLDIDYHTAIDGEGGYVDGYIETIEETDSSAIDIDYHTAVDSEAGHVGGYTESS). Residues 578–607 (EETDSSAIDIDYHTAVDSEAGHVGGYTESS) form a B-2 repeat. Disordered stretches follow at residues 598–625 (GHVGGYTESSEESNPIDFEESTHENSKH), 743–774 (LGYEGGQNSGNQSFEEDTEEDKPKYEQGGNII), 794–903 (IEED…GKVV), and 916–942 (VAPTKQKQAKKSELPETGGEESTNKGM). The D-1; truncated repeat unit spans residues 748 to 770 (GQNSGNQSFEEDTEEDKPKYEQG). Residues 748–839 (GQNSGNQSFE…QQTIEEDTTP (92 aa)) are 4 X approximate tandem repeats. Residues 771 to 785 (GNIIDIDFDSVPQIH) form a D-2; truncated repeat. The stretch at 786–824 (GFNKHNEIIEEDTNKDKPNYQFGGHNSVDFEEDTLPKVS) is one D-3 repeat. The segment covering 794 to 803 (IEEDTNKDKP) has biased composition (basic and acidic residues). The D-4; truncated repeat unit spans residues 825 to 839 (GQNEGQQTIEEDTTP). Residues 839 to 885 (PPTPPTPEVPSEPGTPTPPTPEVPSEPGKPTPPTPEVPAEPGKPVPP) are compositionally biased toward pro residues. WR repeat units lie at residues 840–853 (PTPPTPEVPSEPGT), 854–867 (PTPPTPEVPSEPGK), 868–881 (PTPPTPEVPAEPGK), and 882–895 (PVPPAKEEPKKPSK). The tract at residues 840-895 (PTPPTPEVPSEPGTPTPPTPEVPSEPGKPTPPTPEVPAEPGKPVPPAKEEPKKPSK) is 4 X tandem repeats, Pro-rich (WR). The LPXTG sorting signal motif lies at 929–933 (LPETG). Pentaglycyl murein peptidoglycan amidated threonine is present on threonine 932. Positions 933-965 (GGEESTNKGMLFGGLFSILGLALLRRNKKNHKA) are cleaved as a propeptide — removed by sortase.

It is found in the secreted. It localises to the cell wall. Promotes bacterial attachment to multiple substrates, such as fibronectin (Fn), fibrinogen (Fg), elastin peptides and tropoelastin. This confers to S.aureus the ability to invade endothelial cells. Promotes adherence to and aggregation of activated platelets. The chain is Fibronectin-binding protein A (fnbA) from Staphylococcus aureus (strain MRSA252).